A 224-amino-acid chain; its full sequence is Transcriptional regulatory protein TctD (224 aa).

The 115-residue stretch at 2-116 (RLLLAEDNRE…ELDARLRALL (115 aa)) folds into the Response regulatory domain. Asp51 is subject to 4-aspartylphosphate. Positions 121-219 (GQVHEVQQLG…LRGLGYVLER (99 aa)) form a DNA-binding region, ompR/PhoB-type.

Functionally, transcriptional activator of the tctI tricarboxylate transport system operon. The chain is Transcriptional regulatory protein TctD (tctD) from Salmonella typhimurium (strain SL1344).